The sequence spans 520 residues: MSLLIKNGTIVNDDAIFKSDVLVLDGRIVEIAPSIQPTPGLEVVDATDRLVIPGGIDPHTHMQLPFMGEIAKDDFHRGTEAAVAGGTTMIIDFVIPTKGESLLVAYDRWRGWADPKVVCDYGLSMAITSWGPEIAKEMEIVTGAEYGINSFKFFLAYAGVFMVRDEEFYQGMIQCAKLRALARVHAENGSVIAERCEHLLSSGITGPEGHTQSRPEELEAEATFRACTMASQANCPLYVVHVMSKGAAAAIAHHRKKGAVVFGEPIAAGLATDGSHYYNEDWLHAARYVMSPPLSRDPSTPSALMKLLAAGELHLTATDNCTFDCQQKSLGKDDFTKIPNGVNGVEDRMSVVWDKGVHAGIIDPMRFVAVTSTMAAKIFNCYPQKGRIAVGSDADIVIWNANATRTISKDTHHHAIDFNIFEGMQVHGVPEITISRGRTVWANGQLKTVQGSGQFIPLAPDSQIVFSAVDNRKKAMEPVKIDRIPYEPSALQTPDANANIVVKAPVRAAIPPGGASSIQF.

Zn(2+) is bound by residues His59, His61, and Lys152. The residue at position 152 (Lys152) is an N6-carboxylysine. Substrate is bound at residue Tyr157. Residues His185 and His241 each coordinate Zn(2+). Ser291 serves as a coordination point for substrate. Asp319 lines the Zn(2+) pocket. Asn340 contributes to the substrate binding site.

It belongs to the metallo-dependent hydrolases superfamily. Hydantoinase/dihydropyrimidinase family. As to quaternary structure, homotetramer. Zn(2+) serves as cofactor. Post-translationally, carboxylation allows a single lysine to coordinate two zinc ions. As to expression, body wall muscles.

It catalyses the reaction 5,6-dihydrouracil + H2O = 3-(carbamoylamino)propanoate + H(+). The sequence is that of Dihydropyrimidinase 2 (dhp-2) from Caenorhabditis elegans.